Reading from the N-terminus, the 185-residue chain is Ribosome-recycling factor (185 aa).

The protein belongs to the RRF family.

Its subcellular location is the cytoplasm. Functionally, responsible for the release of ribosomes from messenger RNA at the termination of protein biosynthesis. May increase the efficiency of translation by recycling ribosomes from one round of translation to another. This is Ribosome-recycling factor from Ectopseudomonas mendocina (strain ymp) (Pseudomonas mendocina).